The chain runs to 527 residues: Peptide chain release factor 3 (527 aa).

Positions 9-277 (AKRRTFAIIS…CIVDWAPQPL (269 aa)) constitute a tr-type G domain. Residues 18-25 (SHPDAGKT), 86-90 (DTPGH), and 140-143 (NKLD) contribute to the GTP site.

This sequence belongs to the TRAFAC class translation factor GTPase superfamily. Classic translation factor GTPase family. PrfC subfamily.

It localises to the cytoplasm. Its function is as follows. Increases the formation of ribosomal termination complexes and stimulates activities of RF-1 and RF-2. It binds guanine nucleotides and has strong preference for UGA stop codons. It may interact directly with the ribosome. The stimulation of RF-1 and RF-2 is significantly reduced by GTP and GDP, but not by GMP. This Pseudomonas aeruginosa (strain LESB58) protein is Peptide chain release factor 3.